Consider the following 632-residue polypeptide: FAD-binding monooxygenase ausB (632 aa).

Positions 1-50 are disordered; that stretch reads MASAPEVESVKTPDPASTKTQHTSIAEIHTADQTWNNESNTRLPPNHRHH. 2 stretches are compositionally biased toward polar residues: residues 15–24 and 31–43; these read PASTKTQHTS and ADQT…NTRL. Residues 116 to 119, 128 to 129, and Y134 contribute to the FAD site; these read TWYW and DI. NADP(+) is bound at residue 126–128; the sequence is MCD. NADP(+) is bound by residues 269–275 and 292–293; these read TGSTAIQ and RT.

It belongs to the FAD-binding monooxygenase family. It depends on FAD as a cofactor.

The catalysed reaction is protoaustinoid A + AH2 + O2 = berkeleyone A + A + H2O. The protein operates within secondary metabolite biosynthesis; terpenoid biosynthesis. FAD-binding monooxygenase; part of the gene cluster that mediates the biosynthesis of calidodehydroaustin, a fungal meroterpenoid. The first step of the pathway is the synthesis of 3,5-dimethylorsellinic acid by the polyketide synthase ausA. 3,5-dimethylorsellinic acid is then prenylated by the polyprenyl transferase ausN. Further epoxidation by the FAD-dependent monooxygenase ausM and cyclization by the probable terpene cyclase ausL lead to the formation of protoaustinoid A. Protoaustinoid A is then oxidized to spiro-lactone preaustinoid A3 by the combined action of the FAD-binding monooxygenases ausB and ausC, and the dioxygenase ausE. Acid-catalyzed keto-rearrangement and ring contraction of the tetraketide portion of preaustinoid A3 by ausJ lead to the formation of preaustinoid A4. The aldo-keto reductase ausK, with the help of ausH, is involved in the next step by transforming preaustinoid A4 into isoaustinone which is in turn hydroxylated by the P450 monooxygenase ausI to form austinolide. The cytochrome P450 monooxygenase ausG modifies austinolide to austinol. Austinol is further acetylated to austin by the O-acetyltransferase ausP, which spontaneously changes to dehydroaustin. The cytochrome P450 monooxygenase ausR then converts dehydroaustin is into 7-dehydrodehydroaustin. The hydroxylation catalyzed by ausR permits the O-acetyltransferase ausQ to add an additional acetyl group to the molecule, leading to the formation of acetoxydehydroaustin. The short chain dehydrogenase ausT catalyzes the reduction of the double bond present between carbon atoms 1 and 2 to convert 7-dehydrodehydroaustin into 1,2-dihydro-7-hydroxydehydroaustin. AusQ catalyzes not only an acetylation reaction but also the addition of the PKS ausV diketide product to 1,2-dihydro-7-hydroxydehydroaustin, forming precalidodehydroaustin. Finally, the iron/alpha-ketoglutarate-dependent dioxygenase converts precalidodehydroaustin into calidodehydroaustin. This chain is FAD-binding monooxygenase ausB, found in Aspergillus calidoustus.